The primary structure comprises 92 residues: Small ribosomal subunit protein uS19 (92 aa).

The protein belongs to the universal ribosomal protein uS19 family.

Its function is as follows. Protein S19 forms a complex with S13 that binds strongly to the 16S ribosomal RNA. This is Small ribosomal subunit protein uS19 from Polynucleobacter asymbioticus (strain DSM 18221 / CIP 109841 / QLW-P1DMWA-1) (Polynucleobacter necessarius subsp. asymbioticus).